Reading from the N-terminus, the 206-residue chain is Outer-membrane lipoprotein carrier protein (206 aa).

Positions methionine 1–alanine 23 are cleaved as a signal peptide.

Belongs to the LolA family. As to quaternary structure, monomer.

The protein resides in the periplasm. Functionally, participates in the translocation of lipoproteins from the inner membrane to the outer membrane. Only forms a complex with a lipoprotein if the residue after the N-terminal Cys is not an aspartate (The Asp acts as a targeting signal to indicate that the lipoprotein should stay in the inner membrane). The chain is Outer-membrane lipoprotein carrier protein from Chromobacterium violaceum (strain ATCC 12472 / DSM 30191 / JCM 1249 / CCUG 213 / NBRC 12614 / NCIMB 9131 / NCTC 9757 / MK).